The sequence spans 426 residues: Immunoglobulin mu Fc receptor (426 aa).

Positions 1–16 (MNLWLWLLYFLPVSGT) are cleaved as a signal peptide. An Ig-like domain is found at 24 to 121 (RLEVELGGSV…GKTQKVTLNV (98 aa)). 2 disulfides stabilise this stretch: Cys37/Cys103 and Cys49/Cys58. The residue at position 91 (Thr91) is a Phosphothreonine. The tract at residues 178-212 (KTEAPPVHQPSTNTSVSRHPRVYGASSETPTKPSA) is disordered. Residues 267–287 (FHILIPTFLGFLLLVLLGLVV) form a helical membrane-spanning segment. 2 disordered regions span residues 306–346 (RRMR…REPD) and 401–426 (DSND…PSRQ). Residues 415 to 426 (PSKPPGPRPSRQ) show a composition bias toward pro residues.

As to quaternary structure, interacts (via Ig-like domain) with IGHM (via CH4/Cmu4 domain), both secreted and membrane-bound IgM; the interaction is glycan-independent and multivalent theoretically involving up to eight binding sites for the IgM pentamer. In terms of processing, phosphorylated on both Tyr and Ser residues. Post-translationally, O-glycosylated. Sialylated. O-linked glycans regulate trafficking to the plasma membrane.

The protein localises to the cell membrane. Its subcellular location is the early endosome membrane. The protein resides in the golgi apparatus. It localises to the trans-Golgi network membrane. It is found in the lysosome membrane. In terms of biological role, high-affinity Fc receptor for immunoglobulin M (IgM), both secreted and membrane-bound IgM. Primarily regulates IgM transport and homeostasis. In lymphoid cells, enables exocytosis of membrane-bound IgM on the plasma membrane as well as endocytosis of IgM-antigen complexes toward lysosomes for degradation. In mucosal epithelium, mediates retrotranscytosis of antigen-IgM complexes across mucosal M cells toward antigen-presenting cells in mucosal lymphoid tissues. Triggers costimulatory signaling and mediates most of IgM effector functions involved in B cell development and primary immune response to infection. Likely limits tonic IgM BCR signaling to self-antigens for proper negative selection of autoreactive B cells in the bone marrow and for the maintenance of regulatory B cell pool in peripheral lymphoid organs. Mediates antibody responses to T cell-dependent and T cell-independent antigens and promotes induction of an efficient neutralizing IgG response. Engages in cross-talk with antigen-receptor signaling via the non-canonical NF-kappa-B, MAP kinases and calcium signaling pathways. The protein is Immunoglobulin mu Fc receptor of Rattus norvegicus (Rat).